The following is a 688-amino-acid chain: Alpha-1,4-glucan:maltose-1-phosphate maltosyltransferase (688 aa).

Alpha-maltose 1-phosphate-binding residues include lysine 289, glutamine 349, and aspartate 384. The Nucleophile role is filled by aspartate 420. Residue asparagine 421 coordinates alpha-maltose 1-phosphate. The active-site Proton donor is glutamate 449. Alpha-maltose 1-phosphate is bound at residue 560-561 (KY).

It belongs to the glycosyl hydrolase 13 family. GlgE subfamily. In terms of assembly, homodimer.

The catalysed reaction is alpha-maltose 1-phosphate + [(1-&gt;4)-alpha-D-glucosyl](n) = [(1-&gt;4)-alpha-D-glucosyl](n+2) + phosphate. In terms of biological role, maltosyltransferase that uses maltose 1-phosphate (M1P) as the sugar donor to elongate linear or branched alpha-(1-&gt;4)-glucans. Is involved in a branched alpha-glucan biosynthetic pathway from trehalose, together with TreS, Mak and GlgB. The polypeptide is Alpha-1,4-glucan:maltose-1-phosphate maltosyltransferase (Rhodospirillum rubrum (strain ATCC 11170 / ATH 1.1.1 / DSM 467 / LMG 4362 / NCIMB 8255 / S1)).